Here is a 761-residue protein sequence, read N- to C-terminus: Hyperosmolality-gated Ca2+ permeable channel 1.6 (761 aa).

10 helical membrane passes run 7 to 27 (IGVA…AFAI), 101 to 121 (IYLL…TTMV), 156 to 176 (PRFW…CFIL), 375 to 395 (LIVG…IAFV), 419 to 439 (LLKS…FLLF), 467 to 487 (FYMF…TAFQ), 512 to 532 (ATFF…GEIL), 583 to 603 (AAVS…AFVV), 630 to 650 (VVTA…TKHA), and 653 to 673 (STPL…HCKN). Residues 718-731 (RVGEDPEPEEKLES) show a composition bias toward basic and acidic residues. The tract at residues 718-761 (RVGEDPEPEEKLESDMSPPDLVATKRWSWRNTPLPSKDSCREIP) is disordered.

It belongs to the CSC1 (TC 1.A.17) family.

It localises to the membrane. Functionally, acts as an osmosensitive calcium-permeable cation channel. The sequence is that of Hyperosmolality-gated Ca2+ permeable channel 1.6 from Arabidopsis thaliana (Mouse-ear cress).